Here is an 880-residue protein sequence, read N- to C-terminus: Interference hedgehog (880 aa).

A signal peptide spans 1 to 20 (MPSIVSSLLLVVLLTSPLGA). Topologically, residues 21 to 703 (IPVLYPSPPP…SHNETFSMSP (683 aa)) are extracellular. Ig-like C2-type domains are found at residues 37–142 (PGVR…TARL), 154–235 (PVTS…STSS), 251–339 (PYLL…FIQV), and 345–432 (PQIV…LQVT). 4 disulfide bridges follow: Cys-60-Cys-126, Cys-172-Cys-219, Cys-275-Cys-323, and Cys-366-Cys-414. N-linked (GlcNAc...) asparagine glycosylation is found at Asn-79, Asn-102, and Asn-208. The tract at residues 435-468 (PIHSESTQQSDHNHSKANRGRRPAQMIPPSAPNV) is disordered. N-linked (GlcNAc...) asparagine glycans are attached at residues Asn-447 and Asn-467. 2 consecutive Fibronectin type-III domains span residues 462–570 (PPSA…LQPG) and 578–673 (VPEM…TQRP). Heparin-binding residues include Arg-498, Lys-504, Lys-506, and Arg-544. An N-linked (GlcNAc...) asparagine glycan is attached at Asn-560. Positions 665 to 699 (LKQGRTQRPMVSTTEEATLQTGVRDTTTPSHNETF) are disordered. Residues 668–699 (GRTQRPMVSTTEEATLQTGVRDTTTPSHNETF) show a composition bias toward polar residues. N-linked (GlcNAc...) asparagine glycosylation is present at Asn-696. The chain crosses the membrane as a helical span at residues 704-724 (IVTGTIGGGAVLILFVVTTCL). The Cytoplasmic portion of the chain corresponds to 725 to 880 (CMWRRRNSRA…SSGSLNSVGV (156 aa)). A disordered region spans residues 797–880 (YFQRQPTYDY…SSGSLNSVGV (84 aa)). Low complexity-rich tracts occupy residues 827–839 (RAGS…NNLN) and 864–880 (SSRS…SVGV).

It belongs to the immunoglobulin superfamily. IHOG family. In terms of assembly, homodimer. Heterotetramer; 2 iHog chains bind 2 hh chains when facilitated by heparin, heparin is required to promote high-affinity interactions between hh and iHog.

The protein resides in the membrane. Functionally, mediates response to the active Hedgehog (Hh) protein signal in embryos, functioning upstream or at the level of patched (ptc). In Drosophila ananassae (Fruit fly), this protein is Interference hedgehog.